Here is an 85-residue protein sequence, read N- to C-terminus: uncharacterized protein (85 aa).

Helical transmembrane passes span Ile12–Phe34 and Ile49–Val71.

The protein localises to the cell membrane. This is an uncharacterized protein from Archaeoglobus fulgidus (strain ATCC 49558 / DSM 4304 / JCM 9628 / NBRC 100126 / VC-16).